The sequence spans 776 residues: MSSNRSQNPHGLKQIGLDQIWDDLRAGIQQVYTRQSMAKSRYMELYTHVYNYCTSVHQSNQARGAGVPPSKSKKGQTPGGAQFVGLELYKRLKEFLKNYLTNLLKDGEDLMDESVLKFYTQQWEDYRFSSKVLNGICAYLNRHWVRRECDEGRKGIYEIYSLALVTWRDCLFRPLNKQVTNAVLKLIEKERNGETINTRLISGVVQSYVELGLNEDDAFAKGPTLTVYKESFESQFLADTERFYTRESTEFLQQNPVTEYMKKAEARLLEEQRRVQVYLHESTQDELARKCEQVLIEKHLEIFHTEFQNLLDADKNEDLGRMYNLVSRIQDGLGELKKLLETHIHNQGLAAIEKCGEAALNDPKMYVQTVLDVHKKYNALVMSAFNNDAGFVAALDKACGRFINNNAVTKMAQSSSKSPELLARYCDSLLKKSSKNPEEAELEDTLNQVMVVFKYIEDKDVFQKFYAKMLAKRLVHQNSASDDAEASMISKLKQACGFEYTSKLQRMFQDIGVSKDLNEQFKKHLTNSEPLDLDFSIQVLSSGSWPFQQSCTFALPSELERSYQRFTAFYASRHSGRKLTWLYQLSKGELVTNCFKNRYTLQASTFQMAILLQYNTEDAYTVQQLTDSTQIKMDILAQVLQILLKSKLLVLEDENANVDEVELKPDTLIKLYLGYKNKKLRVNINVPMKTEQKQEQETTHKNIEEDRKLLIQAAIVRIMKMRKVLKHQQLLGEVLTQLSSRFKPRVPVIKKCIDILIEKEYLERVDGEKDTYSYLA.

At Arg-63 the chain carries Omega-N-methylarginine. Residues 706 to 766 (DRKLLIQAAI…IEKEYLERVD (61 aa)) enclose the Cullin neddylation domain. A Glycyl lysine isopeptide (Lys-Gly) (interchain with G-Cter in NEDD8) cross-link involves residue Lys-720.

Belongs to the cullin family. As to quaternary structure, component of multiple Cul1-RING E3 ubiquitin-protein ligase complexes commonly known as SCF (SKP1-CUL1-F-box) complexes, consisting of CUL1, SKP1, RBX1 and a variable F-box domain-containing protein as substrate-specific subunit. Component of the SCF(FBXW11) complex containing FBXW11. Component of the SCF(SKP2) complex containing SKP2, in which it interacts directly with SKP1, SKP2 and RBX1. Component of the SCF(FBXW2) complex containing FBXW2. Component of the SCF(FBXO32) complex containing FBXO32. Component of the probable SCF(FBXO7) complex containing FBXO7. Component of the SCF(FBXO10) complex containing FBXO10. Component of the SCF(FBXO11) complex containing FBXO11. Component of the SCF(FBXO25) complex containing FBXO25. Component of the SCF(FBXO33) complex containing FBXO33. Component of the probable SCF(FBXO4) complex containing FBXO4. Component of the SCF(FBXO44) complex, composed of SKP1, CUL1 and FBXO44. Component of the SCF(BTRC) complex, composed of SKP1, CUL1 and BTRC. This complex binds phosphorylated NFKBIA. Part of a SCF complex consisting of CUL1, RBX1, SKP1 and FBXO2. Component of a SCF(SKP2)-like complex containing CUL1, SKP1, TRIM21 and SKP2. Component of the SCF(FBXO17) complex, composed of SKP1, CUL1 and FBXO17. Component of the SCF(FBXO27) complex, composed of SKP1, CUL1 and FBXO27. Component of the SCF(CCNF) complex consisting of CUL1, RBX1, SKP1 and CCNF. Interacts with CCNF. Component of the SCF(FBXL3) complex composed of CUL1, SKP1, RBX1 and FBXL3. Component of the SCF(FBXL21) complex composed of CUL1, SKP1, RBX1 and FBXL21. Component of the SCF(FBXO9) composed of CUL1, SKP1, RBX1 and FBXO9. Component of the SCF(FBXW7) composed of CUL1, SKP1, RBX1 and FBXW7. Component of the SCF(FBXO31) complex composed of CUL1, SKP1, RBX1 and FBXO31. Interacts with CHEK2; mediates CHEK2 ubiquitination and regulates its function. Part of a complex with TIP120A/CAND1 and RBX1. The unneddylated form interacts with TIP120A/CAND1 and the interaction mediates the exchange of the F-box substrate-specific subunit. Can self-associate. Interacts with FBXW8. Interacts with RNF7. Interacts with TRIM21. Interacts with COPS2. Interacts with DCUN1D1 and UBE2M. Interacts with DCUN1D3. Interacts with DCUN1D4. Identified in a complex with RBX1 and GLMN. Interacts with CEP68 as part of the SCF(FBXW11) complex; the interaction is probably mediated by FBXW11 and the complex also contains CDK5RAP2 and PCNT. Interacts (when neddylated) with ARIH1; leading to activate the E3 ligase activity of ARIH1. Interacts with COPS9. Interacts with UBXN1. Interacts with KAT7, probably as part of an SCF complex; the interaction mediates KAT7 ubiquitination. Interacts with NOTCH2. Part of a complex that contains DCUN1D5, CUL1 and RBX1; this interaction is bridged by CUL1. Interacts (unneddylated form) with DCUN1D1, DCUN1D2, DCUN1D3, DCUN1D4 and DCUN1D5; these interactions promote the cullin neddylation. Interacts (via the C-terminal domain) with CUL7; the interaction seems to be mediated by FBXW8; it is likely specific to FBXW8, but not other F-box proteins. Interacts with UBR2, as part of SCF(BTRC) complex; the interaction mediates 'Lys-48'-linked ubiquitination of UBR2 and is regulated by DUSP22 in the T-cell receptor signaling pathway. In terms of assembly, (Microbial infection) Interacts with murine cytomegalovirus M48. In terms of processing, neddylated; which enhances the ubiquitination activity of SCF. Neddylation prevents binding of the inhibitor CAND1. Neddylation leads to structural rearrangment in the complex that allows interaction between the E2 ubiquitin-conjugating enzyme and the acceptor ubiquitin. Deneddylated via its interaction with the COP9 signalosome (CSN) complex. (Microbial infection) Deneddylated by murine cytomegalovirus M48 leading to a S-phase-like environment that is required for efficient replication of the viral genome. In terms of tissue distribution, embryo fibroblasts and embryo preadipocytes.

The protein operates within protein modification; protein ubiquitination. Its function is as follows. Core component of multiple cullin-RING-based SCF (SKP1-CUL1-F-box protein) E3 ubiquitin-protein ligase complexes, which mediate the ubiquitination of proteins involved in cell cycle progression, signal transduction and transcription. SCF complexes and ARIH1 collaborate in tandem to mediate ubiquitination of target proteins. In the SCF complex, serves as a rigid scaffold that organizes the SKP1-F-box protein and RBX1 subunits. May contribute to catalysis through positioning of the substrate and the ubiquitin-conjugating enzyme. The E3 ubiquitin-protein ligase activity of the complex is dependent on the neddylation of the cullin subunit and exchange of the substrate recognition component is mediated by TIP120A/CAND1. The functional specificity of the SCF complex depends on the F-box protein as substrate recognition component. SCF(BTRC) and SCF(FBXW11) direct ubiquitination of CTNNB1 and participate in Wnt signaling. SCF(FBXW11) directs ubiquitination of phosphorylated NFKBIA. SCF(BTRC) directs ubiquitination of NFKBIB, NFKBIE, ATF4, SMAD3, SMAD4, CDC25A, FBXO5 and probably NFKB2. SCF(BTRC) and/or SCF(FBXW11) direct ubiquitination of CEP68. SCF(SKP2) directs ubiquitination of phosphorylated CDKN1B/p27kip and is involved in regulation of G1/S transition. SCF(SKP2) directs ubiquitination of ORC1, CDT1, RBL2, ELF4, CDKN1A, RAG2, FOXO1A, and probably MYC and TAL1. SCF(FBXW7) directs ubiquitination of cyclin E, NOTCH1 released notch intracellular domain (NICD), and probably PSEN1. SCF(FBXW2) directs ubiquitination of GCM1. SCF(FBXO32) directs ubiquitination of MYOD1. SCF(FBXO7) directs ubiquitination of BIRC2 and DLGAP5. SCF(FBXO33) directs ubiquitination of YBX1. SCF(FBXO1) directs ubiquitination of BCL6 and DTL but does not seem to direct ubiquitination of TP53. SCF(BTRC) mediates the ubiquitination of NFKBIA at 'Lys-21' and 'Lys-22'; the degradation frees the associated NFKB1-RELA dimer to translocate into the nucleus and to activate transcription. SCF(CCNF) directs ubiquitination of CCP110. SCF(FBXL3) and SCF(FBXL21) direct ubiquitination of CRY1 and CRY2. SCF(FBXO9) directs ubiquitination of TTI1 and TELO2. SCF(FBXO10) directs ubiquitination of BCL2. Neddylated CUL1-RBX1 ubiquitinates p53/TP53 recruited by Cul7-RING(FBXW8) complex. SCF(BTRC) directs 'Lys-48'-linked ubiquitination of UBR2 in the T-cell receptor signaling pathway. The SCF(FBXO31) protein ligase complex specifically mediates the ubiquitination of proteins amidated at their C-terminus in response to oxidative stress. In Mus musculus (Mouse), this protein is Cullin-1 (Cul1).